Here is a 98-residue protein sequence, read N- to C-terminus: Large ribosomal subunit protein uL23 (98 aa).

This sequence belongs to the universal ribosomal protein uL23 family. In terms of assembly, part of the 50S ribosomal subunit. Contacts protein L29, and trigger factor when it is bound to the ribosome.

In terms of biological role, one of the early assembly proteins it binds 23S rRNA. One of the proteins that surrounds the polypeptide exit tunnel on the outside of the ribosome. Forms the main docking site for trigger factor binding to the ribosome. This is Large ribosomal subunit protein uL23 from Rickettsia prowazekii (strain Madrid E).